The primary structure comprises 67 residues: Small ribosomal subunit protein eS17 (67 aa).

This sequence belongs to the eukaryotic ribosomal protein eS17 family.

This Pyrococcus horikoshii (strain ATCC 700860 / DSM 12428 / JCM 9974 / NBRC 100139 / OT-3) protein is Small ribosomal subunit protein eS17.